The sequence spans 426 residues: MFGRNFPFFNSIGGFYPRDSLDPRKPSGTGYTSKVRVRDKYHIVGFISSGTYGRVYKAIGKDGRKGEFAIKKFKPDKEGEIIQYTGLSQSAIREMSLCSELDHSNVVQLAEIILEDKCIFMVFEYTEHDLLQIIHHHTQPQRHAIPAPMIKSILFQLLNGLLYLHTNWVLHRDLKPANILVTSSGAVRIGDLGLARLFYKPLNSLYSGDKVVVTIWYRAPELLMGSRHYTPAVDLWAVGCIFAELLSLRPIFKGEEAKMDSKKTVPFQRNQMMKIVEIMGLPRKETWPGLVAMPEFSQLQSLAMARGHLNRQSNLEGWYQSCLKNNGYSPTSSAGTPGPEGFDLLSRLLEYDPLKRISAQEALEHPYFTTGTPITANCFAGYEGKYPHRRVTQDDNDIRSGSLPGTKRSGLPDDSLMGRAAKRLKE.

The Protein kinase domain maps to 41-368 (YHIVGFISSG…AQEALEHPYF (328 aa)). ATP is bound by residues 47-55 (ISSGTYGRV) and lysine 71. Aspartate 173 (proton acceptor) is an active-site residue. Positions 390 to 426 (RVTQDDNDIRSGSLPGTKRSGLPDDSLMGRAAKRLKE) are disordered.

It belongs to the protein kinase superfamily. CMGC Ser/Thr protein kinase family. CDC2/CDKX subfamily. In terms of assembly, component of the srb8-11 complex, a regulatory module of the Mediator complex. Mg(2+) is required as a cofactor.

It localises to the nucleus. The catalysed reaction is L-seryl-[protein] + ATP = O-phospho-L-seryl-[protein] + ADP + H(+). The enzyme catalyses L-threonyl-[protein] + ATP = O-phospho-L-threonyl-[protein] + ADP + H(+). It catalyses the reaction [DNA-directed RNA polymerase] + ATP = phospho-[DNA-directed RNA polymerase] + ADP + H(+). In terms of biological role, component of the srb8-11 complex. The srb8-11 complex is a regulatory module of the Mediator complex which is itself involved in regulation of basal and activated RNA polymerase II-dependent transcription. The srb8-11 complex may be involved in the transcriptional repression of a subset of genes regulated by Mediator. It may inhibit the association of the Mediator complex with RNA polymerase II to form the holoenzyme complex. The srb8-11 complex phosphorylates the C-terminal domain (CTD) of the largest subunit of RNA polymerase II. This Aspergillus clavatus (strain ATCC 1007 / CBS 513.65 / DSM 816 / NCTC 3887 / NRRL 1 / QM 1276 / 107) protein is Serine/threonine-protein kinase ssn3 (ssn3).